A 405-amino-acid polypeptide reads, in one-letter code: Imidazolonepropionase (405 aa).

Positions 72 and 74 each coordinate Fe(3+). Residues histidine 72 and histidine 74 each coordinate Zn(2+). 4-imidazolone-5-propanoate is bound by residues arginine 81, tyrosine 144, and histidine 177. Tyrosine 144 contacts N-formimidoyl-L-glutamate. Residue histidine 242 participates in Fe(3+) binding. A Zn(2+)-binding site is contributed by histidine 242. Glutamine 245 serves as a coordination point for 4-imidazolone-5-propanoate. Aspartate 317 serves as a coordination point for Fe(3+). Aspartate 317 contributes to the Zn(2+) binding site. Positions 319 and 321 each coordinate N-formimidoyl-L-glutamate. 4-imidazolone-5-propanoate is bound at residue threonine 322.

The protein belongs to the metallo-dependent hydrolases superfamily. HutI family. The cofactor is Zn(2+). Fe(3+) serves as cofactor.

The protein resides in the cytoplasm. The catalysed reaction is 4-imidazolone-5-propanoate + H2O = N-formimidoyl-L-glutamate. It participates in amino-acid degradation; L-histidine degradation into L-glutamate; N-formimidoyl-L-glutamate from L-histidine: step 3/3. In terms of biological role, catalyzes the hydrolytic cleavage of the carbon-nitrogen bond in imidazolone-5-propanoate to yield N-formimidoyl-L-glutamate. It is the third step in the universal histidine degradation pathway. This is Imidazolonepropionase from Erwinia tasmaniensis (strain DSM 17950 / CFBP 7177 / CIP 109463 / NCPPB 4357 / Et1/99).